We begin with the raw amino-acid sequence, 104 residues long: Pyrimidine/purine nucleoside phosphorylase (104 aa).

It belongs to the nucleoside phosphorylase PpnP family.

The catalysed reaction is a purine D-ribonucleoside + phosphate = a purine nucleobase + alpha-D-ribose 1-phosphate. The enzyme catalyses adenosine + phosphate = alpha-D-ribose 1-phosphate + adenine. It catalyses the reaction cytidine + phosphate = cytosine + alpha-D-ribose 1-phosphate. It carries out the reaction guanosine + phosphate = alpha-D-ribose 1-phosphate + guanine. The catalysed reaction is inosine + phosphate = alpha-D-ribose 1-phosphate + hypoxanthine. The enzyme catalyses thymidine + phosphate = 2-deoxy-alpha-D-ribose 1-phosphate + thymine. It catalyses the reaction uridine + phosphate = alpha-D-ribose 1-phosphate + uracil. It carries out the reaction xanthosine + phosphate = alpha-D-ribose 1-phosphate + xanthine. Functionally, catalyzes the phosphorolysis of diverse nucleosides, yielding D-ribose 1-phosphate and the respective free bases. Can use uridine, adenosine, guanosine, cytidine, thymidine, inosine and xanthosine as substrates. Also catalyzes the reverse reactions. The chain is Pyrimidine/purine nucleoside phosphorylase from Thiobacillus denitrificans (strain ATCC 25259 / T1).